A 433-amino-acid polypeptide reads, in one-letter code: MITRFAPSPTGLIHLGNARTALIAYFAARSSGGEFILRIDDTDVTRIKSEYVNKIFTDLSWLGIKEDLCIKQSERCELYANAVVKLKESGRIYPCYETPEELEIERRSLLARALPPVYRRKNRPQHSTRLPYYRFELDPDRVVIWEDKLRGKIVIDLHSTSDPIVIRENGTYTYMLPSVVDDIECRISTIIRGEDHISNTAVQIQMFEALGCTEIPKFAHMPLLKLQTGKMSKRAGGNEIQTFRENYIEPEVICLYLLNLGSKSRSTFKNYKDYSNFNLENYSSSSSVTVLEDEIYSLNADFLRLSNYEDLARRLGGVSKTFWDAVKNNVKSIPEVNYWWEICTTEAKLYPGIGCNAQLVRDAISVLPQEEVSRETYRRWVELIVENYRYDKREVHINLRLALTGKVGGPEMAAILPFISRERILIRLNDSLS.

The 'HIGH' region motif lies at 7–17 (PSPTGLIHLGN). The 'KMSKS' region signature appears at 230–234 (KMSKR). K233 contacts ATP.

It belongs to the class-I aminoacyl-tRNA synthetase family. Glutamate--tRNA ligase type 1 subfamily. Monomer.

It is found in the cytoplasm. It catalyses the reaction tRNA(Glu) + L-glutamate + ATP = L-glutamyl-tRNA(Glu) + AMP + diphosphate. Catalyzes the attachment of glutamate to tRNA(Glu) in a two-step reaction: glutamate is first activated by ATP to form Glu-AMP and then transferred to the acceptor end of tRNA(Glu). The protein is Glutamate--tRNA ligase 1 of Neorickettsia sennetsu (strain ATCC VR-367 / Miyayama) (Ehrlichia sennetsu).